A 257-amino-acid chain; its full sequence is Global transcriptional regulator CodY (257 aa).

Positions Met1–Leu155 are GAF domain. A DNA-binding region (H-T-H motif) is located at residues Ala203 to Arg222.

The protein belongs to the CodY family.

It localises to the cytoplasm. DNA-binding global transcriptional regulator which is involved in the adaptive response to starvation and acts by directly or indirectly controlling the expression of numerous genes in response to nutrient availability. During rapid exponential growth, CodY is highly active and represses genes whose products allow adaptation to nutrient depletion. This Staphylococcus haemolyticus (strain JCSC1435) protein is Global transcriptional regulator CodY.